Here is a 338-residue protein sequence, read N- to C-terminus: MKILVAMSGGVDSTVTAYKLKNLGHEVIGCYMKLHGKPNYHEENIKKVEKVANFLQIPYHILDLQKDFKNKVYMPFVDTYKEGKTPNPCALCNRFIKLGKLLEFAKSLGCEKLATGHYARLENNLIKTAVDESKDQSYFLASADKEALKYLIFPLGEMKKEDVKKFASTIEVLKSFATQKESSEICFVEDTYVQVLDQFMDTKIPGEVLDSSGKVVGKHEGYMHYTIGKRRGFEVRGAHEPHFVLKINPKQNQIIVGTKEELKISEFKLKNINLFIDAKELDCEVKIRYRSKSTPCKVEIYEDKSAKITLKDPVYGLASGQMAVFYDHDKVIASGFIE.

ATP is bound by residues 6-13 and Met32; that span reads AMSGGVDS. Cys92 acts as the Nucleophile in catalysis. Cysteines 92 and 186 form a disulfide. Gly116 lines the ATP pocket. The tract at residues 134-136 is interaction with tRNA; sequence KDQ. The active-site Cysteine persulfide intermediate is Cys186. The segment at 288–289 is interaction with tRNA; that stretch reads RY.

It belongs to the MnmA/TRMU family.

It is found in the cytoplasm. The enzyme catalyses S-sulfanyl-L-cysteinyl-[protein] + uridine(34) in tRNA + AH2 + ATP = 2-thiouridine(34) in tRNA + L-cysteinyl-[protein] + A + AMP + diphosphate + H(+). Functionally, catalyzes the 2-thiolation of uridine at the wobble position (U34) of tRNA, leading to the formation of s(2)U34. In Campylobacter jejuni subsp. jejuni serotype O:6 (strain 81116 / NCTC 11828), this protein is tRNA-specific 2-thiouridylase MnmA.